We begin with the raw amino-acid sequence, 218 residues long: Thiamine-phosphate synthase (218 aa).

4-amino-2-methyl-5-(diphosphooxymethyl)pyrimidine contacts are provided by residues 45 to 49 and Asn77; that span reads QYREK. Mg(2+)-binding residues include Asp78 and Asp97. Ser116 serves as a coordination point for 4-amino-2-methyl-5-(diphosphooxymethyl)pyrimidine. 142–144 is a binding site for 2-[(2R,5Z)-2-carboxy-4-methylthiazol-5(2H)-ylidene]ethyl phosphate; that stretch reads TKT. Lys145 is a 4-amino-2-methyl-5-(diphosphooxymethyl)pyrimidine binding site. Residues Gly173 and 193-194 contribute to the 2-[(2R,5Z)-2-carboxy-4-methylthiazol-5(2H)-ylidene]ethyl phosphate site; that span reads VT.

It belongs to the thiamine-phosphate synthase family. The cofactor is Mg(2+).

The enzyme catalyses 2-[(2R,5Z)-2-carboxy-4-methylthiazol-5(2H)-ylidene]ethyl phosphate + 4-amino-2-methyl-5-(diphosphooxymethyl)pyrimidine + 2 H(+) = thiamine phosphate + CO2 + diphosphate. The catalysed reaction is 2-(2-carboxy-4-methylthiazol-5-yl)ethyl phosphate + 4-amino-2-methyl-5-(diphosphooxymethyl)pyrimidine + 2 H(+) = thiamine phosphate + CO2 + diphosphate. It carries out the reaction 4-methyl-5-(2-phosphooxyethyl)-thiazole + 4-amino-2-methyl-5-(diphosphooxymethyl)pyrimidine + H(+) = thiamine phosphate + diphosphate. It participates in cofactor biosynthesis; thiamine diphosphate biosynthesis; thiamine phosphate from 4-amino-2-methyl-5-diphosphomethylpyrimidine and 4-methyl-5-(2-phosphoethyl)-thiazole: step 1/1. Its function is as follows. Condenses 4-methyl-5-(beta-hydroxyethyl)thiazole monophosphate (THZ-P) and 2-methyl-4-amino-5-hydroxymethyl pyrimidine pyrophosphate (HMP-PP) to form thiamine monophosphate (TMP). The polypeptide is Thiamine-phosphate synthase (Pelotomaculum thermopropionicum (strain DSM 13744 / JCM 10971 / SI)).